The following is a 76-amino-acid chain: Large ribosomal subunit protein uL24 (76 aa).

Belongs to the universal ribosomal protein uL24 family. Part of the 50S ribosomal subunit.

Functionally, one of two assembly initiator proteins, it binds directly to the 5'-end of the 23S rRNA, where it nucleates assembly of the 50S subunit. One of the proteins that surrounds the polypeptide exit tunnel on the outside of the subunit. This Sulfurimonas denitrificans (strain ATCC 33889 / DSM 1251) (Thiomicrospira denitrificans (strain ATCC 33889 / DSM 1251)) protein is Large ribosomal subunit protein uL24.